Consider the following 269-residue polypeptide: tRNA pseudouridine synthase A (269 aa).

Residue aspartate 52 is the Nucleophile of the active site. A substrate-binding site is contributed by tyrosine 110.

Belongs to the tRNA pseudouridine synthase TruA family. In terms of assembly, homodimer.

It carries out the reaction uridine(38/39/40) in tRNA = pseudouridine(38/39/40) in tRNA. In terms of biological role, formation of pseudouridine at positions 38, 39 and 40 in the anticodon stem and loop of transfer RNAs. The sequence is that of tRNA pseudouridine synthase A from Bacteroides thetaiotaomicron (strain ATCC 29148 / DSM 2079 / JCM 5827 / CCUG 10774 / NCTC 10582 / VPI-5482 / E50).